Consider the following 508-residue polypeptide: Photosystem II CP47 reaction center protein (508 aa).

6 consecutive transmembrane segments (helical) span residues 21-36 (SVHI…WAGS), 101-115 (IVFS…IWHW), 140-156 (GIHL…FGAF), 203-218 (IAAG…FHLS), 237-252 (VLSS…AFVV), and 457-472 (SFAL…HGSR).

Belongs to the PsbB/PsbC family. PsbB subfamily. PSII is composed of 1 copy each of membrane proteins PsbA, PsbB, PsbC, PsbD, PsbE, PsbF, PsbH, PsbI, PsbJ, PsbK, PsbL, PsbM, PsbT, PsbX, PsbY, PsbZ, Psb30/Ycf12, at least 3 peripheral proteins of the oxygen-evolving complex and a large number of cofactors. It forms dimeric complexes. Binds multiple chlorophylls. PSII binds additional chlorophylls, carotenoids and specific lipids. serves as cofactor.

It localises to the plastid. It is found in the chloroplast thylakoid membrane. One of the components of the core complex of photosystem II (PSII). It binds chlorophyll and helps catalyze the primary light-induced photochemical processes of PSII. PSII is a light-driven water:plastoquinone oxidoreductase, using light energy to abstract electrons from H(2)O, generating O(2) and a proton gradient subsequently used for ATP formation. This chain is Photosystem II CP47 reaction center protein, found in Lobularia maritima (Sweet alyssum).